Consider the following 89-residue polypeptide: MNVSYIAHISGRVQGVYFRASSQQQAIEYSLSGYARNLADGDVEVLLCGDEENIEKMLLWLAHGPEQAKVTEIQHEKVPWQEHHFFSIG.

Positions 4-89 constitute an Acylphosphatase-like domain; sequence SYIAHISGRV…WQEHHFFSIG (86 aa). Active-site residues include Arg19 and Asn37.

It belongs to the acylphosphatase family.

It carries out the reaction an acyl phosphate + H2O = a carboxylate + phosphate + H(+). In Colwellia psychrerythraea (strain 34H / ATCC BAA-681) (Vibrio psychroerythus), this protein is Acylphosphatase (acyP).